We begin with the raw amino-acid sequence, 310 residues long: Olfactory receptor 5P56 (310 aa).

The Extracellular portion of the chain corresponds to 1–25 (MEAQNHTTVKEFILLGLTENSTLRV). Asn5 and Asn20 each carry an N-linked (GlcNAc...) asparagine glycan. The helical transmembrane segment at 26-46 (ILFMIFLGIYTVTLVGNFSII) threads the bilayer. Residues 47–54 (SLIRSCPQ) are Cytoplasmic-facing. Residues 55–75 (LHTPMYLFLSHLALVDIGFST) traverse the membrane as a helical segment. Topologically, residues 76–99 (SITPIMLTGFLGHTVTLSVAACVA) are extracellular. Cys97 and Cys189 are joined by a disulfide. A helical transmembrane segment spans residues 100 to 120 (QFCIAVTFGTVECFLLAVMAY). The Cytoplasmic segment spans residues 121 to 133 (DRYVAICSPLLYS). The helical transmembrane segment at 134–154 (THMSPRICFLLVGASYVGGCV) threads the bilayer. The Extracellular segment spans residues 155–196 (NSGTFTSCLLILSFCGPNQIDHFFCDFPAVLKLSCSDVSIIG). The chain crosses the membrane as a helical span at residues 197-217 (IIPSISAGSIIVITVFVIAVS). The Cytoplasmic portion of the chain corresponds to 218–237 (YTYILITILNMRSTEGRHKA). Residues 238 to 258 (FSTCTSHLTAVTLYYGTITFI) form a helical membrane-spanning segment. Residues 259–271 (YVMPKSNYSTAQN) lie on the Extracellular side of the membrane. N-linked (GlcNAc...) asparagine glycosylation is present at Asn265. Residues 272 to 292 (KILSVFYTVVIPMLNPLIYSL) traverse the membrane as a helical segment. Over 293–310 (RNRDVKEALRKAIIRIFP) the chain is Cytoplasmic.

This sequence belongs to the G-protein coupled receptor 1 family.

The protein resides in the cell membrane. In terms of biological role, potential odorant receptor. This is Olfactory receptor 5P56 from Mus musculus (Mouse).